The chain runs to 983 residues: Bifunctional glutamine synthetase adenylyltransferase/adenylyl-removing enzyme (983 aa).

Positions 1–490 (MDRKSSVTID…AHGQVFYSPV (490 aa)) are adenylyl removase. The tract at residues 496–983 (RIPTQDLRMS…RVVDAVFWNQ (488 aa)) is adenylyl transferase.

The protein belongs to the GlnE family. Mg(2+) serves as cofactor.

The catalysed reaction is [glutamine synthetase]-O(4)-(5'-adenylyl)-L-tyrosine + phosphate = [glutamine synthetase]-L-tyrosine + ADP. The enzyme catalyses [glutamine synthetase]-L-tyrosine + ATP = [glutamine synthetase]-O(4)-(5'-adenylyl)-L-tyrosine + diphosphate. Functionally, involved in the regulation of glutamine synthetase GlnA, a key enzyme in the process to assimilate ammonia. When cellular nitrogen levels are high, the C-terminal adenylyl transferase (AT) inactivates GlnA by covalent transfer of an adenylyl group from ATP to specific tyrosine residue of GlnA, thus reducing its activity. Conversely, when nitrogen levels are low, the N-terminal adenylyl removase (AR) activates GlnA by removing the adenylyl group by phosphorolysis, increasing its activity. The regulatory region of GlnE binds the signal transduction protein PII (GlnB) which indicates the nitrogen status of the cell. This Cutibacterium acnes (strain DSM 16379 / KPA171202) (Propionibacterium acnes) protein is Bifunctional glutamine synthetase adenylyltransferase/adenylyl-removing enzyme.